A 479-amino-acid chain; its full sequence is Glutamate--tRNA ligase (479 aa).

The short motif at 9 to 19 (PSPTGNLHIGT) is the 'HIGH' region element. A 'KMSKS' region motif is present at residues 243 to 247 (KLSKR). ATP is bound at residue Lys-246.

Belongs to the class-I aminoacyl-tRNA synthetase family. Glutamate--tRNA ligase type 1 subfamily. In terms of assembly, monomer.

It localises to the cytoplasm. The enzyme catalyses tRNA(Glu) + L-glutamate + ATP = L-glutamyl-tRNA(Glu) + AMP + diphosphate. Catalyzes the attachment of glutamate to tRNA(Glu) in a two-step reaction: glutamate is first activated by ATP to form Glu-AMP and then transferred to the acceptor end of tRNA(Glu). This chain is Glutamate--tRNA ligase, found in Synechococcus sp. (strain JA-3-3Ab) (Cyanobacteria bacterium Yellowstone A-Prime).